The primary structure comprises 549 residues: Cytochrome c oxidase subunit 1 homolog, bacteroid (549 aa).

A run of 3 helical transmembrane segments spans residues 12-32 (IGES…VIAA), 39-59 (PFAF…FCIV), and 87-107 (FSSF…LIIA). Histidine 131 contacts heme b. Transmembrane regions (helical) follow at residues 132-152 (TSAV…FYVV), 168-188 (FVVV…LLGV), 201-221 (ADLW…ATII), 228-248 (IFVA…LHLG), 279-299 (GHNA…YYFI), 312-332 (LSII…PHHL), 344-364 (LGMT…INGL), and 382-402 (MLVV…MMSI). The Cu cation site is built by histidine 280, histidine 330, and histidine 331. The heme b site is built by histidine 418 and histidine 420. The next 3 membrane-spanning stretches (helical) occupy residues 423-443 (ALGW…PWAW), 458-478 (FWVA…SGIL), and 512-532 (AGGG…WMTV).

It belongs to the heme-copper respiratory oxidase family. Cu(2+) serves as cofactor. Heme b is required as a cofactor.

The protein localises to the cell membrane. The catalysed reaction is 4 Fe(II)-[cytochrome c] + O2 + 8 H(+)(in) = 4 Fe(III)-[cytochrome c] + 2 H2O + 4 H(+)(out). It functions in the pathway energy metabolism; oxidative phosphorylation. Functionally, cytochrome c oxidase is the component of the respiratory chain that catalyzes the reduction of oxygen to water. Subunits 1-3 form the functional core of the enzyme complex. Co I is the catalytic subunit of the enzyme. Electrons originating in cytochrome c or a quinol are transferred to the bimetallic center formed by a high-spin heme and copper B. This is Cytochrome c oxidase subunit 1 homolog, bacteroid (fixN) from Bradyrhizobium diazoefficiens (strain JCM 10833 / BCRC 13528 / IAM 13628 / NBRC 14792 / USDA 110).